A 463-amino-acid polypeptide reads, in one-letter code: Peptidase inhibitor 16 (463 aa).

An N-terminal signal peptide occupies residues 1 to 27 (MHGSCSFLMLLLPLLLLLVATTGPVGA). One can recognise an SCP domain in the interval 37-165 (VELHNLYRAQ…TNIELLVCNY (129 aa)). Asparagine 114 carries N-linked (GlcNAc...) asparagine glycosylation. Disordered stretches follow at residues 262–281 (TQAP…TEAP), 303–341 (EPVT…DPKM), and 383–408 (LQAT…SATA). The span at 318–327 (SADKVTDKTK) shows a compositional bias: basic and acidic residues. The tract at residues 386-395 (TLDHTGHTSS) is O-glycosylated at one site. Residues 392–408 (HTSSKSLPNFPNTSATA) show a composition bias toward polar residues. N-linked (GlcNAc...) asparagine glycans are attached at residues asparagine 403 and asparagine 409.

It belongs to the CRISP family. Interacts with PSP94/MSMB. In terms of processing, N- and O-glycosylated. O-glycosylated with core 1 or possibly core 8 glycans. In terms of tissue distribution, expressed in prostate, testis, ovary and intestine. Concentrates in prostate cancer patient's sera.

Its subcellular location is the secreted. May inhibit cardiomyocyte growth. The sequence is that of Peptidase inhibitor 16 (PI16) from Homo sapiens (Human).